Reading from the N-terminus, the 389-residue chain is Flap endonuclease 1 (389 aa).

Residues 1 to 105 (MGIKGLTALL…GELAKRKDKR (105 aa)) form an N-domain region. Aspartate 34 lines the Mg(2+) pocket. Arginine 71 is a DNA binding site. Aspartate 87, glutamate 159, glutamate 161, aspartate 180, and aspartate 182 together coordinate Mg(2+). The tract at residues 123-254 (EVEKLSKRTV…KTALKLIKEH (132 aa)) is I-domain. Glutamate 159 is a binding site for DNA. DNA-binding residues include glycine 232 and aspartate 234. Aspartate 234 provides a ligand contact to Mg(2+). The interval 338–346 (SQNRLESFF) is interaction with PCNA. A disordered region spans residues 356 to 389 (IGKRKVEETKSGKGSKAGLNKKSKGVSGYKSKKT). Over residues 374-389 (LNKKSKGVSGYKSKKT) the composition is skewed to basic residues.

This sequence belongs to the XPG/RAD2 endonuclease family. FEN1 subfamily. As to quaternary structure, interacts with PCNA. Three molecules of FEN1 bind to one PCNA trimer with each molecule binding to one PCNA monomer. PCNA stimulates the nuclease activity without altering cleavage specificity. It depends on Mg(2+) as a cofactor. In terms of processing, phosphorylated. Phosphorylation upon DNA damage induces relocalization to the nuclear plasma.

Its subcellular location is the nucleus. The protein localises to the nucleolus. It is found in the nucleoplasm. It localises to the mitochondrion. Functionally, structure-specific nuclease with 5'-flap endonuclease and 5'-3' exonuclease activities involved in DNA replication and repair. During DNA replication, cleaves the 5'-overhanging flap structure that is generated by displacement synthesis when DNA polymerase encounters the 5'-end of a downstream Okazaki fragment. It enters the flap from the 5'-end and then tracks to cleave the flap base, leaving a nick for ligation. Also involved in the long patch base excision repair (LP-BER) pathway, by cleaving within the apurinic/apyrimidinic (AP) site-terminated flap. Acts as a genome stabilization factor that prevents flaps from equilibrating into structures that lead to duplications and deletions. Also possesses 5'-3' exonuclease activity on nicked or gapped double-stranded DNA, and exhibits RNase H activity. Also involved in replication and repair of rDNA and in repairing mitochondrial DNA. In Ostreococcus tauri, this protein is Flap endonuclease 1.